The chain runs to 346 residues: DNA primase small subunit PriS (346 aa).

Active-site residues include D95 and D97. Zn(2+) contacts are provided by C106, H108, C114, and C117. Residues 106-117 carry the Zinc knuckle motif motif; sequence CEHEPGTVCPIC. Residue D280 is part of the active site.

It belongs to the eukaryotic-type primase small subunit family. In terms of assembly, heterodimer of a small subunit (PriS) and a large subunit (PriL). Mg(2+) serves as cofactor. The cofactor is Mn(2+).

Its function is as follows. Catalytic subunit of DNA primase, an RNA polymerase that catalyzes the synthesis of short RNA molecules used as primers for DNA polymerase during DNA replication. The small subunit contains the primase catalytic core and has DNA synthesis activity on its own. Binding to the large subunit stabilizes and modulates the activity, increasing the rate of DNA synthesis while decreasing the length of the DNA fragments, and conferring RNA synthesis capability. The DNA polymerase activity may enable DNA primase to also catalyze primer extension after primer synthesis. May also play a role in DNA repair. The sequence is that of DNA primase small subunit PriS from Pyrococcus horikoshii (strain ATCC 700860 / DSM 12428 / JCM 9974 / NBRC 100139 / OT-3).